A 464-amino-acid chain; its full sequence is RYamide receptor (464 aa).

Residues 1-105 lie on the Extracellular side of the membrane; that stretch reads MEHHNSHLLP…EDMWSSAYFK (105 aa). N-linked (GlcNAc...) asparagine glycosylation is found at Asn-49, Asn-79, and Asn-85. A helical transmembrane segment spans residues 106–126; the sequence is IIVYMLYIPIFIFALIGNGTV. The Cytoplasmic segment spans residues 127-148; it reads CYIVYSTPRMRTVTNYFIASLA. Residues 149–169 traverse the membrane as a helical segment; the sequence is IGDILMSFFCVPSSFISLFIL. Residues 170 to 189 lie on the Extracellular side of the membrane; it reads NYWPFGLALCHFVNYSQAVS. N-linked (GlcNAc...) asparagine glycosylation occurs at Asn-183. A helical transmembrane segment spans residues 190-210; sequence VLVSAYTLVAISIDRYIAIMW. The Cytoplasmic segment spans residues 211-221; sequence PLKPRITKRYA. The helical transmembrane segment at 222-242 threads the bilayer; the sequence is TFIIAGVWFIALATALPIPIV. At 243–274 the chain is on the extracellular side; it reads SGLDIPMSPWHTKCEKYICREMWPSRTQEYYY. The chain crosses the membrane as a helical span at residues 275–295; that stretch reads TLSLFALQFVVPLGVLIFTYA. Over 296-329 the chain is Cytoplasmic; sequence RITIRVWAKRPPGEAETNRDQRMARSKRKMVKMM. The chain crosses the membrane as a helical span at residues 330–350; sequence LTVVIVFTCCWLPFNILQLLL. Over 351-363 the chain is Extracellular; that stretch reads NDEEFAHWDPLPY. Residues 364–384 traverse the membrane as a helical segment; it reads VWFAFHWLAMSHCCYNPIIYC. At 385–464 the chain is on the cytoplasmic side; sequence YMNARFRSGF…LSCGETSPLR (80 aa).

This sequence belongs to the G-protein coupled receptor 1 family.

Its subcellular location is the cell membrane. In terms of biological role, receptor for the neuropeptides RYamide-1 and RYamide-2. The activity of this receptor is mediated by G proteins which activate a phosphatidyl-inositol-calcium second messenger system. RYamide signaling may suppress feeding behavior. The protein is RYamide receptor of Drosophila melanogaster (Fruit fly).